The primary structure comprises 395 residues: Subtilisin-like protease 5 (395 aa).

The first 19 residues, M1 to A19, serve as a signal peptide directing secretion. Residues A20–H115 constitute a propeptide that is removed on maturation. The Inhibitor I9 domain maps to Y36 to I112. The Peptidase S8 domain occupies P124 to R395. Active-site charge relay system residues include D155 and H186. 2 N-linked (GlcNAc...) asparagine glycosylation sites follow: N229 and N247. The active-site Charge relay system is the S341. The disordered stretch occupies residues Q374–R395. A glycan (N-linked (GlcNAc...) asparagine) is linked at N391.

Belongs to the peptidase S8 family.

It is found in the secreted. Functionally, secreted subtilisin-like serine protease with keratinolytic activity that contributes to pathogenicity. The protein is Subtilisin-like protease 5 (SUB5) of Arthroderma otae (strain ATCC MYA-4605 / CBS 113480) (Microsporum canis).